Here is a 461-residue protein sequence, read N- to C-terminus: Putative aldehyde dehydrogenase FUS7 (461 aa).

220–225 (GSTATG) is an NAD(+) binding site. Catalysis depends on residues E242 and C276.

This sequence belongs to the aldehyde dehydrogenase family.

The catalysed reaction is an aldehyde + NAD(+) + H2O = a carboxylate + NADH + 2 H(+). Its function is as follows. Putative aldehyde dehydrogenase; part of the gene cluster that mediates the biosynthesis of the mycotoxin fusarin C. Within the cluster, FUS1, FUS2, FUS8 and FUS9 are sufficient for fusarin production. The other FUS cluster members are not essential for fusarin C biosynthesis. This is Putative aldehyde dehydrogenase FUS7 from Gibberella moniliformis (strain M3125 / FGSC 7600) (Maize ear and stalk rot fungus).